Reading from the N-terminus, the 159-residue chain is Photosystem II extrinsic protein U, chloroplastic (159 aa).

It belongs to the PsbU family. PSII is composed of 1 copy each of membrane proteins PsbA, PsbB, PsbC, PsbD, PsbE, PsbF, PsbH, PsbI, PsbJ, PsbK, PsbL, PsbM, PsbT, PsbX, PsbY, PsbZ, Psb30/Ycf12, at least 3 peripheral proteins of the oxygen-evolving complex and a large number of cofactors. It forms dimeric complexes. Part of the oxygen-evolving complex of photosystem II.

Its subcellular location is the plastid. The protein localises to the chloroplast thylakoid membrane. Functionally, one of the extrinsic, lumenal subunits of photosystem II (PSII). PSII is a light-driven water plastoquinone oxidoreductase, using light energy to abstract electrons from H(2)O, generating a proton gradient subsequently used for ATP formation. The extrinsic proteins stabilize the structure of photosystem II oxygen-evolving complex (OEC), the ion environment of oxygen evolution and protect the OEC against heat-induced inactivation. The chain is Photosystem II extrinsic protein U, chloroplastic from Karenia brevis (Red tide dinoflagellate).